Consider the following 183-residue polypeptide: ARS-binding factor 2, mitochondrial (183 aa).

A mitochondrion-targeting transit peptide spans 1–26; sequence MNSYSLLTRSFHESSKPLFNLASTLL. DNA-binding regions (HMG box) lie at residues 43-111 and 116-183; these read PKRP…KEFD and PKKP…YPLN.

The protein resides in the mitochondrion. It is found in the nucleus. Functionally, specific binding to the autonomously replicating sequence 1 (ARS1). Interaction with regulatory regions: probably involved in compacting the mitochondrial genome. It might play a positive role in gene expression and replication. The polypeptide is ARS-binding factor 2, mitochondrial (ABF2) (Saccharomyces cerevisiae (strain ATCC 204508 / S288c) (Baker's yeast)).